We begin with the raw amino-acid sequence, 141 residues long: Universal stress protein A homolog (141 aa).

Belongs to the universal stress protein A family. Homodimer.

The protein resides in the cytoplasm. Functionally, required for resistance to DNA-damaging agents. This chain is Universal stress protein A homolog (uspA), found in Haemophilus influenzae (strain ATCC 51907 / DSM 11121 / KW20 / Rd).